The primary structure comprises 229 residues: Aquaporin Z (229 aa).

2 helical membrane passes run 8–28 (FFGT…AAGV) and 33–53 (IGYL…AYAI). Positions 62 to 64 (NPA) match the NPA 1 motif. Transmembrane regions (helical) follow at residues 81–101 (LPYV…LYLI), 131–151 (AALV…LGAT), and 158–178 (GFAP…SIPV). The NPA 2 motif lies at 184 to 186 (NPA). The chain crosses the membrane as a helical span at residues 199–219 (AVSQLWLFWVAPILGAVLGAL).

This sequence belongs to the MIP/aquaporin (TC 1.A.8) family. In terms of assembly, homotetramer.

It is found in the cell inner membrane. It catalyses the reaction H2O(in) = H2O(out). Channel that permits osmotically driven movement of water in both directions. It is involved in the osmoregulation and in the maintenance of cell turgor during volume expansion in rapidly growing cells. It mediates rapid entry or exit of water in response to abrupt changes in osmolarity. The polypeptide is Aquaporin Z (Pseudomonas aeruginosa (strain ATCC 15692 / DSM 22644 / CIP 104116 / JCM 14847 / LMG 12228 / 1C / PRS 101 / PAO1)).